An 888-amino-acid polypeptide reads, in one-letter code: uncharacterized protein (888 aa).

A signal peptide spans 1-20 (MKILKSLVLLVLFIVMPAKA). Helical transmembrane passes span 513–533 (IVKA…VAGA), 565–585 (TYFF…VVGA), 611–631 (LLFI…IITI), 649–669 (VIAF…IILM), 682–702 (ISTL…FLLI), and 781–801 (LLFY…NIVV).

This sequence belongs to the TrbL/VirB6 family.

Its subcellular location is the cell membrane. This is an uncharacterized protein from Rickettsia prowazekii (strain Madrid E).